Here is a 378-residue protein sequence, read N- to C-terminus: Zinc finger protein DPF3 (378 aa).

Lysine 99 is covalently cross-linked (Glycyl lysine isopeptide (Lys-Gly) (interchain with G-Cter in SUMO2)). A disordered region spans residues 145-193; it reads VLENDENVEEGNEEEDLEEDIPKRKNRTRGRARGSAGGRRRHDAASQED. The segment covering 148 to 163 has biased composition (acidic residues); it reads NDENVEEGNEEEDLEE. A compositionally biased stretch (basic residues) spans 168–186; it reads RKNRTRGRARGSAGGRRRH. A C2H2-type zinc finger spans residues 198–221; it reads YVCDICGKRYKNRPGLSYHYAHTH. The tract at residues 225–254 is disordered; that stretch reads EEGDEAQDQETRSPPNHRNENHRPQKGPDG. 2 consecutive PHD-type zinc fingers follow at residues 259 to 319 and 316 to 366; these read NNYC…CKSC and CKSC…CWEL. Residues 317–332 form an interaction with HDGFL2 region; the sequence is KSCILCGTSENDDQLL. Phosphoserine is present on glycine 323.

Belongs to the requiem/DPF family. As to quaternary structure, component of the BAF complex, which includes at least actin (ACTB), ARID1A, ARID1B/BAF250, SMARCA2, SMARCA4/BRG1/BAF190A, ACTL6A/BAF53, ACTL6B/BAF53B, SMARCE1/BAF57, SMARCC1/BAF155, SMARCC2/BAF170, SMARCB1/SNF5/INI1, and one or more of SMARCD1/BAF60A, SMARCD2/BAF60B, or SMARCD3/BAF60C. In muscle cells, the BAF complex also contains DPF3. Interacts with acetylated histones H3 and H4. Component of neuron-specific chromatin remodeling complex (nBAF complex) composed of at least, ARID1A/BAF250A or ARID1B/BAF250B, SMARCD1/BAF60A, SMARCD3/BAF60C, SMARCA2/BRM/BAF190B, SMARCA4/BRG1/BAF190A, SMARCB1/BAF47, SMARCC1/BAF155, SMARCE1/BAF57, SMARCC2/BAF170, DPF1/BAF45B, DPF3/BAF45C, ACTL6B/BAF53B and actin. In terms of assembly, interacts with HDGFL2, SMARCA4/BRG1/BAF190A, SMARCC1/BAF155 and SMARCD1/BAF60A. Post-translationally, phosphorylation at Ser-323 enhances its interaction with HDGFL2.

Its subcellular location is the nucleus. Functionally, belongs to the neuron-specific chromatin remodeling complex (nBAF complex). During neural development a switch from a stem/progenitor to a post-mitotic chromatin remodeling mechanism occurs as neurons exit the cell cycle and become committed to their adult state. The transition from proliferating neural stem/progenitor cells to post-mitotic neurons requires a switch in subunit composition of the npBAF and nBAF complexes. As neural progenitors exit mitosis and differentiate into neurons, npBAF complexes which contain ACTL6A/BAF53A and PHF10/BAF45A, are exchanged for homologous alternative ACTL6B/BAF53B and DPF1/BAF45B or DPF3/BAF45C subunits in neuron-specific complexes (nBAF). The npBAF complex is essential for the self-renewal/proliferative capacity of the multipotent neural stem cells. The nBAF complex along with CREST plays a role regulating the activity of genes essential for dendrite growth. Muscle-specific component of the BAF complex, a multiprotein complex involved in transcriptional activation and repression of select genes by chromatin remodeling (alteration of DNA-nucleosome topology). Specifically binds acetylated lysines on histone 3 and 4 (H3K14ac, H3K9ac, H4K5ac, H4K8ac, H4K12ac, H4K16ac). In the complex, it acts as a tissue-specific anchor between histone acetylations and methylations and chromatin remodeling. It thereby probably plays an essential role in heart and skeletal muscle development. Its function is as follows. Acts as a regulator of myogenesis in cooperation with HDGFL2. Mediates the interaction of HDGFL2 with the BAF complex. HDGFL2-DPF3a activate myogenic genes by increasing chromatin accessibility through recruitment of SMARCA4/BRG1/BAF190A (ATPase subunit of the BAF complex) to myogenic gene promoters. The chain is Zinc finger protein DPF3 (DPF3) from Homo sapiens (Human).